Reading from the N-terminus, the 30-residue chain is Cycloviolacin-O4 (30 aa).

The cyclopeptide (Gly-Asn) cross-link spans 1 to 30; that stretch reads GIPCGESCVWIPCISSAIGCSCKNKVCYRN. 3 cysteine pairs are disulfide-bonded: Cys-4-Cys-20, Cys-8-Cys-22, and Cys-13-Cys-27.

In terms of processing, this is a cyclic peptide. In terms of tissue distribution, expressed in petals, petioles, roots and runners but not in leaves (at protein level).

Functionally, probably participates in a plant defense mechanism. The protein is Cycloviolacin-O4 of Viola odorata (Sweet violet).